Here is a 159-residue protein sequence, read N- to C-terminus: Transcription elongation factor GreA (159 aa).

Residues 45 to 67 adopt a coiled-coil conformation; it reads NAEYHEARKEQSFVEGKIRELQL.

The protein belongs to the GreA/GreB family.

Functionally, necessary for efficient RNA polymerase transcription elongation past template-encoded arresting sites. The arresting sites in DNA have the property of trapping a certain fraction of elongating RNA polymerases that pass through, resulting in locked ternary complexes. Cleavage of the nascent transcript by cleavage factors such as GreA or GreB allows the resumption of elongation from the new 3'terminus. GreA releases sequences of 2 to 3 nucleotides. The chain is Transcription elongation factor GreA from Neorickettsia sennetsu (strain ATCC VR-367 / Miyayama) (Ehrlichia sennetsu).